Here is a 33-residue protein sequence, read N- to C-terminus: Photosystem II reaction center protein Psb30 (33 aa).

The chain crosses the membrane as a helical span at residues 5-25; the sequence is LIVQLTSLALITLAGPLIVAL.

The protein belongs to the Psb30/Ycf12 family. In terms of assembly, PSII is composed of 1 copy each of membrane proteins PsbA, PsbB, PsbC, PsbD, PsbE, PsbF, PsbH, PsbI, PsbJ, PsbK, PsbL, PsbM, PsbT, PsbY, PsbZ, Psb30/Ycf12, peripheral proteins of the oxygen-evolving complex and a large number of cofactors. It forms dimeric complexes.

The protein resides in the plastid. It is found in the chloroplast thylakoid membrane. In terms of biological role, a core subunit of photosystem II (PSII), probably helps stabilize the reaction center. The sequence is that of Photosystem II reaction center protein Psb30 from Euglena sanguinea.